A 21-amino-acid chain; its full sequence is Mast cell protease 3 (21 aa).

In terms of domain architecture, Peptidase S1 spans 1–21; the sequence is IIGGVESRPHSRPYMATLEIT. The tract at residues 1–21 is disordered; that stretch reads IIGGVESRPHSRPYMATLEIT.

The protein belongs to the peptidase S1 family. Granzyme subfamily.

In terms of biological role, thrombin inactivating protease. Displays chymotrypsin-like substrate specificity. This Mus musculus (Mouse) protein is Mast cell protease 3 (Mcpt3).